A 214-amino-acid chain; its full sequence is Probable nicotinate-nucleotide adenylyltransferase (214 aa).

The protein belongs to the NadD family.

It catalyses the reaction nicotinate beta-D-ribonucleotide + ATP + H(+) = deamido-NAD(+) + diphosphate. It functions in the pathway cofactor biosynthesis; NAD(+) biosynthesis; deamido-NAD(+) from nicotinate D-ribonucleotide: step 1/1. Functionally, catalyzes the reversible adenylation of nicotinate mononucleotide (NaMN) to nicotinic acid adenine dinucleotide (NaAD). In Thermomicrobium roseum (strain ATCC 27502 / DSM 5159 / P-2), this protein is Probable nicotinate-nucleotide adenylyltransferase.